A 361-amino-acid chain; its full sequence is 3-dehydroquinate synthase (361 aa).

NAD(+) is bound by residues 60–65 (DAEAAK), 94–98 (GATTD), 118–119 (TT), Lys-131, and Lys-140. Residues Glu-173, His-242, and His-258 each contribute to the Zn(2+) site.

This sequence belongs to the sugar phosphate cyclases superfamily. Dehydroquinate synthase family. Co(2+) is required as a cofactor. The cofactor is Zn(2+). Requires NAD(+) as cofactor.

The protein localises to the cytoplasm. The enzyme catalyses 7-phospho-2-dehydro-3-deoxy-D-arabino-heptonate = 3-dehydroquinate + phosphate. Its pathway is metabolic intermediate biosynthesis; chorismate biosynthesis; chorismate from D-erythrose 4-phosphate and phosphoenolpyruvate: step 2/7. Catalyzes the conversion of 3-deoxy-D-arabino-heptulosonate 7-phosphate (DAHP) to dehydroquinate (DHQ). The polypeptide is 3-dehydroquinate synthase (Cutibacterium acnes (strain DSM 16379 / KPA171202) (Propionibacterium acnes)).